We begin with the raw amino-acid sequence, 360 residues long: Cannabinoid receptor 2 (360 aa).

Residues 1-33 are Extracellular-facing; the sequence is MAGCRELELTNGSNGGLEFNPMKEYMILSDAQQ. N-linked (GlcNAc...) asparagine glycosylation is present at N11. A helical transmembrane segment spans residues 34–59; that stretch reads IAVAVLCTLMGLLSALENVAVLYLIL. Over 60-71 the chain is Cytoplasmic; sequence SSQRLRRKPSYL. The chain crosses the membrane as a helical span at residues 72-92; the sequence is FIGSLAGADFLASVIFACNFV. The Extracellular segment spans residues 93–104; the sequence is IFHVFHGVDSRN. The chain crosses the membrane as a helical span at residues 105 to 129; the sequence is IFLLKIGSVTMTFTASVGSLLLTAV. Residues 130–149 lie on the Cytoplasmic side of the membrane; the sequence is DRYLCLCYPPTYKALVTRGR. The helical transmembrane segment at 150-172 threads the bilayer; the sequence is ALVALGVMWVLSALISYLPLMGW. Over 173-188 the chain is Extracellular; it reads TCCPSPCSELFPLIPN. Residues 189-214 traverse the membrane as a helical segment; that stretch reads DYLLGWLLFIAILFSGIIYTYGYVLW. At 215 to 246 the chain is on the cytoplasmic side; it reads KAHQHVASLAEHQDRQVPGIARMRLDVRLAKT. A helical membrane pass occupies residues 247-267; it reads LGLVMAVLLICWFPALALMGH. The Extracellular portion of the chain corresponds to 268–279; sequence SLVTTLSDKVKE. A helical membrane pass occupies residues 280–301; the sequence is AFAFCSMLCLVNSMINPIIYAL. Topologically, residues 302 to 360 are cytoplasmic; sequence RSGEIRSAAQHCLTGWKKYLQGLGSEGKEEAPKSSVTETEAEVKTTTGPGSRTPGCSNC. Residues 327 to 360 form a disordered region; it reads EGKEEAPKSSVTETEAEVKTTTGPGSRTPGCSNC. 2 positions are modified to phosphoserine: S335 and S336. T338 bears the Phosphothreonine mark. Positions 349-360 are enriched in polar residues; that stretch reads GPGSRTPGCSNC. Position 352 is a phosphoserine (S352).

Belongs to the G-protein coupled receptor 1 family. In terms of processing, constitutively phosphorylated on Ser-352; phosphorylation increases cell internalization and desensitizes the receptor. Expressed in spleen and brain by neurons and glial cells (at protein level). Expressed in lung, testis and thymus but not in heart, liver or kidney. Expressed in cerebellum, cortex and brainstem.

It localises to the cell membrane. The protein localises to the cell projection. It is found in the dendrite. The protein resides in the perikaryon. Heterotrimeric G protein-coupled receptor for endocannabinoid 2-arachidonoylglycerol mediating inhibition of adenylate cyclase. May function in inflammatory response, nociceptive transmission and bone homeostasis. The protein is Cannabinoid receptor 2 (Cnr2) of Rattus norvegicus (Rat).